We begin with the raw amino-acid sequence, 307 residues long: UDP-N-acetylenolpyruvoylglucosamine reductase (307 aa).

The 165-residue stretch at 33–197 (TGGNADFYIT…LEAAFTLAPG (165 aa)) folds into the FAD-binding PCMH-type domain. Residue Arg-176 is part of the active site. The active-site Proton donor is the Ser-226. The active site involves Glu-296.

It belongs to the MurB family. It depends on FAD as a cofactor.

Its subcellular location is the cytoplasm. The enzyme catalyses UDP-N-acetyl-alpha-D-muramate + NADP(+) = UDP-N-acetyl-3-O-(1-carboxyvinyl)-alpha-D-glucosamine + NADPH + H(+). The protein operates within cell wall biogenesis; peptidoglycan biosynthesis. Functionally, cell wall formation. The protein is UDP-N-acetylenolpyruvoylglucosamine reductase of Staphylococcus aureus (strain MRSA252).